The primary structure comprises 288 residues: Very-long-chain (3R)-3-hydroxyacyl-CoA dehydratase 1 (288 aa).

The disordered stretch occupies residues 1–59 (MGRLTEAAAAGGGASAARSAGPPPAPLPLSSTSPGCAAAMASSEEDGTNGGASEASDER). The Cytoplasmic segment spans residues 1–75 (MGRLTEAAAA…RRLGLLATIW (75 aa)). Residues 76–95 (LTFYNIAMTAGWLVLAIAMV) form a helical membrane-spanning segment. Residues 96-114 (RFYMEKGTHKGLYKSIQKT) are Lumenal-facing. A helical membrane pass occupies residues 115–131 (LKFFQTFALLEIVHCLI). Topologically, residues 132–141 (GIVPTSVLVA) are cytoplasmic. The helical transmembrane segment at 142-159 (GVQVSSRIFMVWLVTHSI) threads the bilayer. At 160–165 (KPIQNE) the chain is on the lumenal side. Residues 166–180 (ESVVLFLVAWTVTEI) form a helical membrane-spanning segment. The Cytoplasmic segment spans residues 181–203 (TRYSFYTFSLLDHLPYFIKWARY). A helical membrane pass occupies residues 204–221 (NFFIILYPVGVAGELLTI). Active-site residues include tyrosine 210 and glutamate 217. Topologically, residues 222–251 (YAALPYVKKTGMFSIRLPNKYNVSFDYYYF) are lumenal. Asparagine 243 carries an N-linked (GlcNAc...) asparagine glycan. A helical membrane pass occupies residues 252–269 (LLITMASYIPLFPQLYFH). The Cytoplasmic segment spans residues 270-288 (MLRQRRKVLHGEVIVEKDD).

It belongs to the very long-chain fatty acids dehydratase HACD family. As to quaternary structure, may interact with enzymes of the ELO family (including ELOVL1); with those enzymes that mediate condensation, the first of the four steps of the reaction cycle responsible for fatty acids elongation, may be part of a larger fatty acids elongase complex. Interacts with TECR. In terms of processing, N-glycosylated. As to expression, expressed in heart.

The protein resides in the endoplasmic reticulum membrane. It catalyses the reaction a very-long-chain (3R)-3-hydroxyacyl-CoA = a very-long-chain (2E)-enoyl-CoA + H2O. It carries out the reaction (3R)-hydroxyhexadecanoyl-CoA = (2E)-hexadecenoyl-CoA + H2O. The catalysed reaction is (3R)-hydroxyoctadecanoyl-CoA = (2E)-octadecenoyl-CoA + H2O. The enzyme catalyses (3R)-hydroxyeicosanoyl-CoA = (2E)-eicosenoyl-CoA + H2O. It catalyses the reaction (3R)-hydroxydocosanoyl-CoA = (2E)-docosenoyl-CoA + H2O. It carries out the reaction (3R)-hydroxytetracosanoyl-CoA = (2E)-tetracosenoyl-CoA + H2O. The catalysed reaction is (3R)-hydroxyhexacosanoyl-CoA = (2E)-hexacosenoyl-CoA + H2O. The protein operates within lipid metabolism; fatty acid biosynthesis. Functionally, catalyzes the third of the four reactions of the long-chain fatty acids elongation cycle. This endoplasmic reticulum-bound enzymatic process, allows the addition of two carbons to the chain of long- and very long-chain fatty acids/VLCFAs per cycle. This enzyme catalyzes the dehydration of the 3-hydroxyacyl-CoA intermediate into trans-2,3-enoyl-CoA, within each cycle of fatty acid elongation. Thereby, it participates in the production of VLCFAs of different chain lengths that are involved in multiple biological processes as precursors of membrane lipids and lipid mediators. The chain is Very-long-chain (3R)-3-hydroxyacyl-CoA dehydratase 1 (HACD1) from Ovis aries (Sheep).